We begin with the raw amino-acid sequence, 322 residues long: ATP-dependent 6-phosphofructokinase (322 aa).

Residue Gly-11 participates in ATP binding. Residue 21–25 (RAVVR) participates in ADP binding. ATP is bound by residues 72-73 (RC) and 102-105 (GDGS). Asp-103 is a Mg(2+) binding site. Substrate is bound at residue 127–129 (TID). Asp-129 serves as the catalytic Proton acceptor. Residue Arg-156 coordinates ADP. Substrate contacts are provided by residues Arg-164 and 171–173 (MGR). ADP contacts are provided by residues 187-189 (GAE), Arg-213, and 215-217 (KKH). Residues Glu-224, Arg-245, and 251–254 (HVQR) contribute to the substrate site.

It belongs to the phosphofructokinase type A (PFKA) family. ATP-dependent PFK group I subfamily. Prokaryotic clade 'B1' sub-subfamily. As to quaternary structure, homotetramer. Mg(2+) serves as cofactor.

It is found in the cytoplasm. It carries out the reaction beta-D-fructose 6-phosphate + ATP = beta-D-fructose 1,6-bisphosphate + ADP + H(+). It functions in the pathway carbohydrate degradation; glycolysis; D-glyceraldehyde 3-phosphate and glycerone phosphate from D-glucose: step 3/4. Allosterically activated by ADP and other diphosphonucleosides, and allosterically inhibited by phosphoenolpyruvate. Functionally, catalyzes the phosphorylation of D-fructose 6-phosphate to fructose 1,6-bisphosphate by ATP, the first committing step of glycolysis. In Staphylococcus aureus (strain JH1), this protein is ATP-dependent 6-phosphofructokinase.